A 121-amino-acid chain; its full sequence is Ribosome-binding factor A (121 aa).

Belongs to the RbfA family. In terms of assembly, monomer. Binds 30S ribosomal subunits, but not 50S ribosomal subunits or 70S ribosomes.

The protein resides in the cytoplasm. One of several proteins that assist in the late maturation steps of the functional core of the 30S ribosomal subunit. Associates with free 30S ribosomal subunits (but not with 30S subunits that are part of 70S ribosomes or polysomes). Required for efficient processing of 16S rRNA. May interact with the 5'-terminal helix region of 16S rRNA. The protein is Ribosome-binding factor A of Clostridium tetani (strain Massachusetts / E88).